The primary structure comprises 173 residues: Alkyl hydroperoxide reductase AhpD (173 aa).

Cys-131 acts as the Proton donor in catalysis. An intrachain disulfide couples Cys-131 to Cys-134. Cys-134 functions as the Cysteine sulfenic acid (-SOH) intermediate in the catalytic mechanism.

This sequence belongs to the AhpD family.

It catalyses the reaction N(6)-[(R)-dihydrolipoyl]-L-lysyl-[lipoyl-carrier protein] + a hydroperoxide = N(6)-[(R)-lipoyl]-L-lysyl-[lipoyl-carrier protein] + an alcohol + H2O. Its function is as follows. Antioxidant protein with alkyl hydroperoxidase activity. Required for the reduction of the AhpC active site cysteine residues and for the regeneration of the AhpC enzyme activity. The polypeptide is Alkyl hydroperoxide reductase AhpD (Maricaulis maris (strain MCS10) (Caulobacter maris)).